The chain runs to 327 residues: Elongation factor P--(R)-beta-lysine ligase (327 aa).

78–80 (SPE) is a binding site for substrate. Residues 102-104 (RNQ) and Asn-111 each bind ATP. Tyr-120 provides a ligand contact to substrate. Position 246–247 (246–247 (EL)) interacts with ATP. Glu-253 contacts substrate. Gly-302 is a binding site for ATP.

Belongs to the class-II aminoacyl-tRNA synthetase family. EpmA subfamily. As to quaternary structure, homodimer.

It catalyses the reaction D-beta-lysine + L-lysyl-[protein] + ATP = N(6)-((3R)-3,6-diaminohexanoyl)-L-lysyl-[protein] + AMP + diphosphate + H(+). In terms of biological role, with EpmB is involved in the beta-lysylation step of the post-translational modification of translation elongation factor P (EF-P). Catalyzes the ATP-dependent activation of (R)-beta-lysine produced by EpmB, forming a lysyl-adenylate, from which the beta-lysyl moiety is then transferred to the epsilon-amino group of a conserved specific lysine residue in EF-P. The sequence is that of Elongation factor P--(R)-beta-lysine ligase from Baumannia cicadellinicola subsp. Homalodisca coagulata.